The primary structure comprises 96 residues: UPF0235 protein MK0273 (96 aa).

This sequence belongs to the UPF0235 family.

The polypeptide is UPF0235 protein MK0273 (Methanopyrus kandleri (strain AV19 / DSM 6324 / JCM 9639 / NBRC 100938)).